A 213-amino-acid chain; its full sequence is Protein-L-isoaspartate O-methyltransferase (213 aa).

The active site involves serine 64.

This sequence belongs to the methyltransferase superfamily. L-isoaspartyl/D-aspartyl protein methyltransferase family.

The protein resides in the cytoplasm. It catalyses the reaction [protein]-L-isoaspartate + S-adenosyl-L-methionine = [protein]-L-isoaspartate alpha-methyl ester + S-adenosyl-L-homocysteine. In terms of biological role, catalyzes the methyl esterification of L-isoaspartyl residues in peptides and proteins that result from spontaneous decomposition of normal L-aspartyl and L-asparaginyl residues. It plays a role in the repair and/or degradation of damaged proteins. This Flavobacterium psychrophilum (strain ATCC 49511 / DSM 21280 / CIP 103535 / JIP02/86) protein is Protein-L-isoaspartate O-methyltransferase.